The primary structure comprises 222 residues: DUF1769 family protein (222 aa).

It belongs to the UPF0590 family.

The protein localises to the cytoplasm. It is found in the nucleus. This is DUF1769 family protein from Schizosaccharomyces pombe (strain 972 / ATCC 24843) (Fission yeast).